The following is a 296-amino-acid chain: Small ribosomal subunit biogenesis GTPase RsgA (296 aa).

The CP-type G domain occupies 65 to 226 (TNELIRPPIS…VADTPGFSSL (162 aa)). GTP-binding positions include 114 to 117 (TKMD) and 169 to 177 (GQSGVGKSS). Residues Cys250, Cys255, His257, and Cys263 each contribute to the Zn(2+) site.

The protein belongs to the TRAFAC class YlqF/YawG GTPase family. RsgA subfamily. Monomer. Associates with 30S ribosomal subunit, binds 16S rRNA. Zn(2+) is required as a cofactor.

The protein resides in the cytoplasm. In terms of biological role, one of several proteins that assist in the late maturation steps of the functional core of the 30S ribosomal subunit. Helps release RbfA from mature subunits. May play a role in the assembly of ribosomal proteins into the subunit. Circularly permuted GTPase that catalyzes slow GTP hydrolysis, GTPase activity is stimulated by the 30S ribosomal subunit. The protein is Small ribosomal subunit biogenesis GTPase RsgA of Bacillus velezensis (strain DSM 23117 / BGSC 10A6 / LMG 26770 / FZB42) (Bacillus amyloliquefaciens subsp. plantarum).